The primary structure comprises 382 residues: Putative glutamate--cysteine ligase 2-1 (382 aa).

This sequence belongs to the glutamate--cysteine ligase type 2 family. YbdK subfamily.

The catalysed reaction is L-cysteine + L-glutamate + ATP = gamma-L-glutamyl-L-cysteine + ADP + phosphate + H(+). ATP-dependent carboxylate-amine ligase which exhibits weak glutamate--cysteine ligase activity. The polypeptide is Putative glutamate--cysteine ligase 2-1 (Frankia alni (strain DSM 45986 / CECT 9034 / ACN14a)).